The chain runs to 741 residues: NAD(P)H-quinone oxidoreductase subunit 5, chloroplastic (741 aa).

16 helical membrane-spanning segments follow: residues 9-29 (WVIP…LFFI), 39-59 (IWAF…IQLS), 89-109 (IDPL…LVLI), 125-145 (FVYI…SNLI), 147-167 (IYFF…FWFT), 185-205 (GDFG…SLEF), 219-239 (NGIN…GAVA), 258-278 (TPIS…FLLA), 280-300 (LFPL…VGTI), 327-347 (LGYM…FHLI), 354-374 (ALLF…VGYS), 396-416 (TTFL…CFWS), 425-445 (WLYS…TAFY), 542-562 (LFPL…GISF), 605-625 (AISS…LYGS), and 721-741 (ISSY…FFIS).

It belongs to the complex I subunit 5 family. NDH is composed of at least 16 different subunits, 5 of which are encoded in the nucleus.

The protein localises to the plastid. The protein resides in the chloroplast thylakoid membrane. It carries out the reaction a plastoquinone + NADH + (n+1) H(+)(in) = a plastoquinol + NAD(+) + n H(+)(out). The enzyme catalyses a plastoquinone + NADPH + (n+1) H(+)(in) = a plastoquinol + NADP(+) + n H(+)(out). In terms of biological role, NDH shuttles electrons from NAD(P)H:plastoquinone, via FMN and iron-sulfur (Fe-S) centers, to quinones in the photosynthetic chain and possibly in a chloroplast respiratory chain. The immediate electron acceptor for the enzyme in this species is believed to be plastoquinone. Couples the redox reaction to proton translocation, and thus conserves the redox energy in a proton gradient. The sequence is that of NAD(P)H-quinone oxidoreductase subunit 5, chloroplastic (ndhF) from Lolium perenne (Perennial ryegrass).